The sequence spans 329 residues: Vomeronasal type-1 receptor 43 (329 aa).

The Extracellular segment spans residues M1–T32. A helical membrane pass occupies residues F33–L53. The Cytoplasmic portion of the chain corresponds to K54–D65. Residues L66–A86 form a helical membrane-spanning segment. Residues T87–R109 lie on the Extracellular side of the membrane. An intrachain disulfide couples C101 to C188. The chain crosses the membrane as a helical span at residues V110–L130. At S131–H147 the chain is on the cytoplasmic side. Residues I148–V168 form a helical membrane-spanning segment. Over S169–E209 the chain is Extracellular. N-linked (GlcNAc...) asparagine glycosylation is found at N175 and N201. A helical membrane pass occupies residues Y210–H230. Topologically, residues R231–T255 are cytoplasmic. Residues I256–L276 form a helical membrane-spanning segment. Residues R277–T285 are Extracellular-facing. The chain crosses the membrane as a helical span at residues S286–M306. The Cytoplasmic portion of the chain corresponds to S307–H329.

Belongs to the G-protein coupled receptor 1 family.

Its subcellular location is the cell membrane. Functionally, putative pheromone receptor implicated in the regulation of social and reproductive behavior. This is Vomeronasal type-1 receptor 43 (Vmn1r43) from Mus musculus (Mouse).